The chain runs to 159 residues: 3-hydroxyacyl-[acyl-carrier-protein] dehydratase FabZ (159 aa).

The active site involves His58.

The protein belongs to the thioester dehydratase family. FabZ subfamily.

It localises to the cytoplasm. It carries out the reaction a (3R)-hydroxyacyl-[ACP] = a (2E)-enoyl-[ACP] + H2O. Its function is as follows. Involved in unsaturated fatty acids biosynthesis. Catalyzes the dehydration of short chain beta-hydroxyacyl-ACPs and long chain saturated and unsaturated beta-hydroxyacyl-ACPs. The protein is 3-hydroxyacyl-[acyl-carrier-protein] dehydratase FabZ of Helicobacter pylori (strain HPAG1).